The chain runs to 321 residues: MVKKIAVLTSGGDAPGMNAAIRGVVRAGLSEGLEVYGIQDGYYGLYHDRVIKLERRSVSEVINRGGTFLGSARFPEFKNPEVRAKCVETLKKYEIDALVVIGGDGSYMGAKLLTEEHGIACIGLPGTIDNDVAGTDYTIGFQTALETALEAIDRLRDTSTSHQRISIVEIMGRHCGDLTLSAALAGGCEYIIIPEKGFDKESLIRNIEDGFNKGKRHAIIAITELMTDVHQLAREIEERFGHETRAAVLGHTQRGGAPCAFDRILASRMGVYAVELLMQGYGGRCVGIQNEKLVHHDIIDAITNMRRPFKEEIFNTSRKLF.

ATP is bound at residue G12. Position 22–26 (22–26) interacts with ADP; sequence RGVVR. ATP-binding positions include 73 to 74 and 103 to 106; these read RF and GDGS. D104 contributes to the Mg(2+) binding site. 127-129 is a binding site for substrate; the sequence is TID. The active-site Proton acceptor is D129. R156 contributes to the ADP binding site. Substrate is bound by residues R164 and 171–173; that span reads MGR. ADP is bound by residues 187 to 189, K213, and 215 to 217; these read GCE and KRH. Substrate contacts are provided by residues E224, R245, and 251 to 254; that span reads HTQR.

This sequence belongs to the phosphofructokinase type A (PFKA) family. ATP-dependent PFK group I subfamily. Prokaryotic clade 'B1' sub-subfamily. In terms of assembly, homotetramer. Mg(2+) serves as cofactor.

It is found in the cytoplasm. The catalysed reaction is beta-D-fructose 6-phosphate + ATP = beta-D-fructose 1,6-bisphosphate + ADP + H(+). Its pathway is carbohydrate degradation; glycolysis; D-glyceraldehyde 3-phosphate and glycerone phosphate from D-glucose: step 3/4. Its activity is regulated as follows. Allosterically activated by ADP and other diphosphonucleosides, and allosterically inhibited by phosphoenolpyruvate. Its function is as follows. Catalyzes the phosphorylation of D-fructose 6-phosphate to fructose 1,6-bisphosphate by ATP, the first committing step of glycolysis. The chain is ATP-dependent 6-phosphofructokinase from Glaesserella parasuis serovar 5 (strain SH0165) (Haemophilus parasuis).